The sequence spans 653 residues: DNA polymerase (653 aa).

This sequence belongs to the DNA polymerase type-B family.

It carries out the reaction DNA(n) + a 2'-deoxyribonucleoside 5'-triphosphate = DNA(n+1) + diphosphate. In terms of biological role, replicates viral genomic DNA. This chain is DNA polymerase, found in Acidianus convivator (ABV).